A 468-amino-acid polypeptide reads, in one-letter code: ATP synthase subunit beta (468 aa).

155 to 162 contributes to the ATP binding site; sequence GGAGVGKT.

Belongs to the ATPase alpha/beta chains family. F-type ATPases have 2 components, CF(1) - the catalytic core - and CF(0) - the membrane proton channel. CF(1) has five subunits: alpha(3), beta(3), gamma(1), delta(1), epsilon(1). CF(0) has three main subunits: a(1), b(2) and c(9-12). The alpha and beta chains form an alternating ring which encloses part of the gamma chain. CF(1) is attached to CF(0) by a central stalk formed by the gamma and epsilon chains, while a peripheral stalk is formed by the delta and b chains.

The protein localises to the cell membrane. The catalysed reaction is ATP + H2O + 4 H(+)(in) = ADP + phosphate + 5 H(+)(out). Produces ATP from ADP in the presence of a proton gradient across the membrane. The catalytic sites are hosted primarily by the beta subunits. The polypeptide is ATP synthase subunit beta (Streptococcus pyogenes serotype M5 (strain Manfredo)).